The following is a 747-amino-acid chain: Elongation factor G, mitochondrial (747 aa).

The transit peptide at 1–32 (MTLITRVLNSNLPLRLSALKTVRQLQCGYSSH) directs the protein to the mitochondrion. In terms of domain architecture, tr-type G spans 42–319 (ERIRNIGISA…AIIDYLPNPG (278 aa)). GTP is bound by residues 51–58 (AHIDSGKT), 118–122 (DTPGH), and 172–175 (NKLD).

This sequence belongs to the TRAFAC class translation factor GTPase superfamily. Classic translation factor GTPase family. EF-G/EF-2 subfamily.

The protein localises to the mitochondrion. The protein operates within protein biosynthesis; polypeptide chain elongation. Functionally, mitochondrial GTPase that catalyzes the GTP-dependent ribosomal translocation step during translation elongation. During this step, the ribosome changes from the pre-translocational (PRE) to the post-translocational (POST) state as the newly formed A-site-bound peptidyl-tRNA and P-site-bound deacylated tRNA move to the P and E sites, respectively. Catalyzes the coordinated movement of the two tRNA molecules, the mRNA and conformational changes in the ribosome. Essential during development as it acts as a retrograde signal from mitochondria to the nucleus to slow down cell proliferation if mitochondrial energy output is low. This chain is Elongation factor G, mitochondrial, found in Drosophila virilis (Fruit fly).